Reading from the N-terminus, the 90-residue chain is Barrier-to-autointegration factor-like protein (90 aa).

It belongs to the BAF family. In terms of assembly, homodimer. Heterodimerizes with BANF1. In terms of tissue distribution, expressed strongly in testis and pancreas. Also detected in brain, colon, liver, lung, ovary, placenta, prostate, small intestine, spleen and thymus. Not detected in heart, kidney and skeletal muscle.

It is found in the nucleus. The protein localises to the cytoplasm. Functionally, may play a role in BANF1 regulation and influence tissue-specific roles of BANF1. The protein is Barrier-to-autointegration factor-like protein (BANF2) of Homo sapiens (Human).